A 152-amino-acid chain; its full sequence is Deoxyuridine 5'-triphosphate nucleotidohydrolase (152 aa).

Substrate contacts are provided by residues R71–G73, N84, L88–D90, and M98.

Belongs to the dUTPase family. Mg(2+) is required as a cofactor.

The enzyme catalyses dUTP + H2O = dUMP + diphosphate + H(+). It functions in the pathway pyrimidine metabolism; dUMP biosynthesis; dUMP from dCTP (dUTP route): step 2/2. This enzyme is involved in nucleotide metabolism: it produces dUMP, the immediate precursor of thymidine nucleotides and it decreases the intracellular concentration of dUTP so that uracil cannot be incorporated into DNA. This is Deoxyuridine 5'-triphosphate nucleotidohydrolase from Salmonella arizonae (strain ATCC BAA-731 / CDC346-86 / RSK2980).